We begin with the raw amino-acid sequence, 1356 residues long: MLLPSDVARLVLGYLQQEKLSSTCRSFILESPNLREYAEHYTDEGSIPGCVLSLFGKNLTTILNEYIAMKAKENKEEIPVMVSALWKKLDHTLSQIRSMQNCLVLPTSQKVRTRYGIQDLRHQRMLTSHAASTGSAVALQQTSTPIAAKQVMLRSFTSQSASQTIVSPLCSGQSTIQCTNSPATESKGETLQNSALSDAEKKQTSSPMRRKTDCQRRRRAAPLNSSSATHEGETEGNVDSLQDLIDGNFPQLVIENAREKILSNKSLQEKLAENINKFLGSDTATQASKLSEGGALEQYTSIDEILGLQGGEMHMSEEAIHDILEQTELDPDFQELYDLFACSSTKPTKLASRDPSLQTEGVATTSIHVANDNLEPMESSFDASVDTSHSSNHSEVGAAQKKDGRSQLVVPSPTPKVTESTGMPSKVQEMPISASERQSMSDRSVESKKSIDSVIILDNTGSDTVIESNEEVQVTSMEVGISQSQDVDMNVLHTEVIGADCQLAVEQGSLNMLTVDLTVPNLKEETPKMQTYEKASEAKKSSPLKDEVQALGSRRLERNKSEGAEGPCTTESQNIVVLVSIGSTVTESNLLNQRGDLPATPRKTDTSTETTVSEQMQAESSITSKELKVLQKQASKTPPHPMVPPISPSIKGSSSDSDGSSLPLEVSSSVGVSTPVNTSNVEQNCSDVSSVDPSQIITLSFITEDIAEDAELTKAVKSISERSNSALLLSPFHKPQESSSIVSIPGPTSETLTLLADPREVVNVSGDVATGVKPAEDCTIISLPGASNLSTDGGIIQLMPATSSSFAPSGSFFISTCNTGGAQQSNIMVVPSNCAPASTQKQPCHFQTPPRPHSVYTVGQAISPKLSQGSTFILASAVQPVLPGVMGMFPVSVVGQSSNTFTTPSHQVLHVPVSQGVPKLSLPPKSQKPVPPRTLASAAEKQGTAATTDSGNRKSSSRMQRSENVDKNLAAMSQNKPEERQTSTTNPSTKGTENHKRVLCFENTAANRGTPNTKSLCNSAAPQNKDKVETMNTSSSSLPAKQNNKDSGKADKTAPSTEANSKCESVPSKQPVVPATKDLSGDKKPVAVASSPDVLGGVMANKENMLQKENKKQELPEVSKKSSTADGAAGNLERTVQAVHETGRKHATLPSILRRTKLSTERMCPPSPLTKQASDLLQSMQFNSPNAKHFSGGDLPIPRTPGSGIDDRLVDSHQDHMKTPKSKRYPEDGGTPKPMLPPATPELPACSPASETGSENSVNMAAHTLMILSRATLAKTDGSSPLKDNTQQIKLSKNSSKKRKLDEPDEYGRRPHKKELMSPSAILKRKKMKKHRKKSTDDFPAGMDVDKFLMSLHYDE.

In terms of domain architecture, LisH spans 3 to 35; it reads LPSDVARLVLGYLQQEKLSSTCRSFILESPNLR. 3 stretches are compositionally biased toward polar residues: residues 180-196, 381-394, and 607-624; these read NSPATESKGETLQNSAL, FDASVDTSHSSNHS, and STETTVSEQMQAESSITS. 7 disordered regions span residues 180 to 242, 379 to 446, 589 to 688, 916 to 1092, 1107 to 1130, 1180 to 1258, and 1276 to 1342; these read NSPA…DSLQ, SSFD…RSVE, NLLN…CSDV, GVPK…ASSP, QKENKKQELPEVSKKSSTADGAAG, MQFN…ENSV, and TDGS…FPAG. A compositionally biased stretch (pro residues) spans 638–647; sequence PPHPMVPPIS. Residues 648–664 show a composition bias toward low complexity; it reads PSIKGSSSDSDGSSLPL. Residues 666-688 are compositionally biased toward polar residues; that stretch reads VSSSVGVSTPVNTSNVEQNCSDV. The span at 917–928 shows a compositional bias: low complexity; sequence VPKLSLPPKSQK. Polar residues-rich tracts occupy residues 944–959, 982–991, 1004–1022, and 1030–1042; these read TAATTDSGNRKSSSRM, TSTTNPSTKG, TAANRGTPNTKSLCNSAAP, and TMNTSSSSLPAKQ. Basic and acidic residues predominate over residues 1043–1052; it reads NNKDSGKADK. The segment covering 1054-1063 has biased composition (polar residues); the sequence is APSTEANSKC. 2 stretches are compositionally biased toward basic and acidic residues: residues 1107–1120 and 1205–1218; these read QKENKKQELPEVSK and IDDRLVDSHQDHMK. Polar residues-rich tracts occupy residues 1249–1258 and 1277–1289; these read ASETGSENSV and DGSSPLKDNTQQI. The span at 1300–1309 shows a compositional bias: basic and acidic residues; it reads KLDEPDEYGR. The span at 1323 to 1334 shows a compositional bias: basic residues; that stretch reads LKRKKMKKHRKK.

This sequence belongs to the NPAT family.

Its subcellular location is the nucleus. Its function is as follows. Required for progression through the G1 and S phases of the cell cycle and for S phase entry. Activates transcription of the histone H2A, histone H2B, histone H3 and histone H4 genes. The sequence is that of Protein NPAT (npat) from Xenopus laevis (African clawed frog).